Here is a 371-residue protein sequence, read N- to C-terminus: DNA replication and repair protein RecF (371 aa).

Gly-30–Thr-37 serves as a coordination point for ATP.

The protein belongs to the RecF family.

It is found in the cytoplasm. The RecF protein is involved in DNA metabolism; it is required for DNA replication and normal SOS inducibility. RecF binds preferentially to single-stranded, linear DNA. It also seems to bind ATP. The chain is DNA replication and repair protein RecF from Staphylococcus haemolyticus (strain JCSC1435).